The primary structure comprises 334 residues: Holliday junction branch migration complex subunit RuvB (334 aa).

The interval Ala-4–Tyr-184 is large ATPase domain (RuvB-L). ATP is bound by residues Arg-24, Gly-65, Lys-68, Thr-69, Thr-70, Glu-131 to Tyr-133, Arg-174, Tyr-184, and Arg-221. Thr-69 provides a ligand contact to Mg(2+). The interval Asn-185–Asp-255 is small ATPAse domain (RuvB-S). The interval Ser-258 to Asp-334 is head domain (RuvB-H). 3 residues coordinate DNA: Arg-294, Arg-313, and Arg-318.

It belongs to the RuvB family. Homohexamer. Forms an RuvA(8)-RuvB(12)-Holliday junction (HJ) complex. HJ DNA is sandwiched between 2 RuvA tetramers; dsDNA enters through RuvA and exits via RuvB. An RuvB hexamer assembles on each DNA strand where it exits the tetramer. Each RuvB hexamer is contacted by two RuvA subunits (via domain III) on 2 adjacent RuvB subunits; this complex drives branch migration. In the full resolvosome a probable DNA-RuvA(4)-RuvB(12)-RuvC(2) complex forms which resolves the HJ.

The protein localises to the cytoplasm. The enzyme catalyses ATP + H2O = ADP + phosphate + H(+). The RuvA-RuvB-RuvC complex processes Holliday junction (HJ) DNA during genetic recombination and DNA repair, while the RuvA-RuvB complex plays an important role in the rescue of blocked DNA replication forks via replication fork reversal (RFR). RuvA specifically binds to HJ cruciform DNA, conferring on it an open structure. The RuvB hexamer acts as an ATP-dependent pump, pulling dsDNA into and through the RuvAB complex. RuvB forms 2 homohexamers on either side of HJ DNA bound by 1 or 2 RuvA tetramers; 4 subunits per hexamer contact DNA at a time. Coordinated motions by a converter formed by DNA-disengaged RuvB subunits stimulates ATP hydrolysis and nucleotide exchange. Immobilization of the converter enables RuvB to convert the ATP-contained energy into a lever motion, pulling 2 nucleotides of DNA out of the RuvA tetramer per ATP hydrolyzed, thus driving DNA branch migration. The RuvB motors rotate together with the DNA substrate, which together with the progressing nucleotide cycle form the mechanistic basis for DNA recombination by continuous HJ branch migration. Branch migration allows RuvC to scan DNA until it finds its consensus sequence, where it cleaves and resolves cruciform DNA. In Shewanella amazonensis (strain ATCC BAA-1098 / SB2B), this protein is Holliday junction branch migration complex subunit RuvB.